A 289-amino-acid polypeptide reads, in one-letter code: Phosphatidylserine decarboxylase proenzyme (289 aa).

Active-site charge relay system; for autoendoproteolytic cleavage activity residues include D92, H149, and S254. S254 acts as the Schiff-base intermediate with substrate; via pyruvic acid; for decarboxylase activity in catalysis. S254 is modified (pyruvic acid (Ser); by autocatalysis).

It belongs to the phosphatidylserine decarboxylase family. PSD-B subfamily. Prokaryotic type I sub-subfamily. Heterodimer of a large membrane-associated beta subunit and a small pyruvoyl-containing alpha subunit. It depends on pyruvate as a cofactor. Is synthesized initially as an inactive proenzyme. Formation of the active enzyme involves a self-maturation process in which the active site pyruvoyl group is generated from an internal serine residue via an autocatalytic post-translational modification. Two non-identical subunits are generated from the proenzyme in this reaction, and the pyruvate is formed at the N-terminus of the alpha chain, which is derived from the carboxyl end of the proenzyme. The autoendoproteolytic cleavage occurs by a canonical serine protease mechanism, in which the side chain hydroxyl group of the serine supplies its oxygen atom to form the C-terminus of the beta chain, while the remainder of the serine residue undergoes an oxidative deamination to produce ammonia and the pyruvoyl prosthetic group on the alpha chain. During this reaction, the Ser that is part of the protease active site of the proenzyme becomes the pyruvoyl prosthetic group, which constitutes an essential element of the active site of the mature decarboxylase.

It is found in the cell membrane. It carries out the reaction a 1,2-diacyl-sn-glycero-3-phospho-L-serine + H(+) = a 1,2-diacyl-sn-glycero-3-phosphoethanolamine + CO2. The protein operates within phospholipid metabolism; phosphatidylethanolamine biosynthesis; phosphatidylethanolamine from CDP-diacylglycerol: step 2/2. Catalyzes the formation of phosphatidylethanolamine (PtdEtn) from phosphatidylserine (PtdSer). This chain is Phosphatidylserine decarboxylase proenzyme, found in Pseudomonas aeruginosa (strain UCBPP-PA14).